We begin with the raw amino-acid sequence, 104 residues long: L-rhamnose mutarotase (104 aa).

Position 18 (Tyr-18) interacts with substrate. The Proton donor role is filled by His-22. Substrate is bound by residues Tyr-41 and 76–77 (WW).

This sequence belongs to the rhamnose mutarotase family. In terms of assembly, homodimer.

It localises to the cytoplasm. The catalysed reaction is alpha-L-rhamnose = beta-L-rhamnose. It participates in carbohydrate metabolism; L-rhamnose metabolism. Functionally, involved in the anomeric conversion of L-rhamnose. The polypeptide is L-rhamnose mutarotase (Phocaeicola vulgatus (strain ATCC 8482 / DSM 1447 / JCM 5826 / CCUG 4940 / NBRC 14291 / NCTC 11154) (Bacteroides vulgatus)).